The sequence spans 253 residues: Probable transcriptional regulatory protein Mmar10_2433 (253 aa).

The protein belongs to the TACO1 family.

The protein localises to the cytoplasm. The chain is Probable transcriptional regulatory protein Mmar10_2433 from Maricaulis maris (strain MCS10) (Caulobacter maris).